The primary structure comprises 134 residues: Cytochrome b5 (134 aa).

The Cytochrome b5 heme-binding domain maps to 6–82 (VKYFTRAEVA…MKQYKVGELV (77 aa)). Residues H41 and H65 each contribute to the heme site. The helical transmembrane segment at 111–131 (WLMPFVLGLVATLIYKFFFGT) threads the bilayer.

The protein belongs to the cytochrome b5 family.

It localises to the endoplasmic reticulum membrane. Its subcellular location is the microsome membrane. In terms of biological role, cytochrome b5 is a membrane bound hemoprotein which function as an electron carrier for several membrane bound oxygenases. In Musca domestica (House fly), this protein is Cytochrome b5 (Cyt-b5).